Here is a 199-residue protein sequence, read N- to C-terminus: NAD(P)H dehydrogenase (quinone) (199 aa).

Residues Val-4–Val-190 enclose the Flavodoxin-like domain. FMN-binding positions include Ser-10–Ile-15 and Thr-79–Phe-81. Tyr-12 is an NAD(+) binding site. Trp-99 serves as a coordination point for substrate. Residues Ser-114 to Gly-119 and His-134 each bind FMN.

It belongs to the WrbA family. FMN is required as a cofactor.

It carries out the reaction a quinone + NADH + H(+) = a quinol + NAD(+). The catalysed reaction is a quinone + NADPH + H(+) = a quinol + NADP(+). This Marinobacter nauticus (strain ATCC 700491 / DSM 11845 / VT8) (Marinobacter aquaeolei) protein is NAD(P)H dehydrogenase (quinone).